The following is a 250-amino-acid chain: Eukaryotic translation initiation factor 3 subunit K (250 aa).

The PCI domain occupies 46-229 (FDCYANLALL…KENEARSEVK (184 aa)).

It belongs to the eIF-3 subunit K family. Component of the eukaryotic translation initiation factor 3 (eIF-3) complex.

It localises to the cytoplasm. In terms of biological role, component of the eukaryotic translation initiation factor 3 (eIF-3) complex, which is involved in protein synthesis of a specialized repertoire of mRNAs and, together with other initiation factors, stimulates binding of mRNA and methionyl-tRNAi to the 40S ribosome. The eIF-3 complex specifically targets and initiates translation of a subset of mRNAs involved in cell proliferation. This Emericella nidulans (strain FGSC A4 / ATCC 38163 / CBS 112.46 / NRRL 194 / M139) (Aspergillus nidulans) protein is Eukaryotic translation initiation factor 3 subunit K.